The primary structure comprises 458 residues: GTPase Der (458 aa).

EngA-type G domains follow at residues 3–167 (PVVV…PETE) and 176–351 (IKLA…AQYT). Residues 9-16 (GRPNVGKS), 56-60 (DTGGF), 119-122 (NKID), 182-189 (GRPNVGKS), 229-233 (DTAGL), and 294-297 (NKWD) each bind GTP. In terms of domain architecture, KH-like spans 352 to 436 (FNIKTGELNN…PIRLFFREKP (85 aa)).

Belongs to the TRAFAC class TrmE-Era-EngA-EngB-Septin-like GTPase superfamily. EngA (Der) GTPase family. Associates with the 50S ribosomal subunit.

Its function is as follows. GTPase that plays an essential role in the late steps of ribosome biogenesis. The protein is GTPase Der of Desulfosudis oleivorans (strain DSM 6200 / JCM 39069 / Hxd3) (Desulfococcus oleovorans).